The sequence spans 429 residues: Glutamate-1-semialdehyde 2,1-aminomutase 1 (429 aa).

The residue at position 267 (Lys267) is an N6-(pyridoxal phosphate)lysine.

The protein belongs to the class-III pyridoxal-phosphate-dependent aminotransferase family. HemL subfamily. As to quaternary structure, homodimer. The cofactor is pyridoxal 5'-phosphate.

It localises to the cytoplasm. It catalyses the reaction (S)-4-amino-5-oxopentanoate = 5-aminolevulinate. Its pathway is porphyrin-containing compound metabolism; protoporphyrin-IX biosynthesis; 5-aminolevulinate from L-glutamyl-tRNA(Glu): step 2/2. The chain is Glutamate-1-semialdehyde 2,1-aminomutase 1 from Bacillus velezensis (strain DSM 23117 / BGSC 10A6 / LMG 26770 / FZB42) (Bacillus amyloliquefaciens subsp. plantarum).